The following is a 687-amino-acid chain: Histone deacetylase clr3 (687 aa).

The interval 55 to 385 is histone deacetylase; sequence KKSGLCYDPR…ALAVAQSLLG (331 aa). The active site involves His195.

The protein belongs to the histone deacetylase family. HD type 2 subfamily. As to quaternary structure, interacts with ccq1, clr1, clr2 and mit1.

The protein localises to the nucleus. The protein resides in the chromosome. It is found in the centromere. It localises to the telomere. The catalysed reaction is N(6)-acetyl-L-lysyl-[histone] + H2O = L-lysyl-[histone] + acetate. Its function is as follows. Responsible for the deacetylation of lysine residues on the N-terminal part of the core histones (H2A, H2B, H3 and H4). Histone deacetylation gives a tag for epigenetic repression and plays an important role in transcriptional regulation, cell cycle progression and developmental events. Histone deacetylases act via the formation of large multiprotein complexes. Required for proper positioning of nucleosomes at heterochromatic loci and for transcriptional gene silencing (TGS) function of the Snf2/Hdac-containing repressor complex (SHREC). The protein is Histone deacetylase clr3 (clr3) of Schizosaccharomyces pombe (strain 972 / ATCC 24843) (Fission yeast).